Reading from the N-terminus, the 359-residue chain is Phosphoserine aminotransferase (359 aa).

Position 41 (Arg-41) interacts with L-glutamate. Pyridoxal 5'-phosphate contacts are provided by residues 75–76 (AS), Trp-99, Thr-147, Asp-166, and Gln-189. Lys-190 carries the N6-(pyridoxal phosphate)lysine modification. 231-232 (NT) serves as a coordination point for pyridoxal 5'-phosphate.

Belongs to the class-V pyridoxal-phosphate-dependent aminotransferase family. SerC subfamily. As to quaternary structure, homodimer. Pyridoxal 5'-phosphate serves as cofactor.

It is found in the cytoplasm. It catalyses the reaction O-phospho-L-serine + 2-oxoglutarate = 3-phosphooxypyruvate + L-glutamate. It carries out the reaction 4-(phosphooxy)-L-threonine + 2-oxoglutarate = (R)-3-hydroxy-2-oxo-4-phosphooxybutanoate + L-glutamate. Its pathway is amino-acid biosynthesis; L-serine biosynthesis; L-serine from 3-phospho-D-glycerate: step 2/3. It functions in the pathway cofactor biosynthesis; pyridoxine 5'-phosphate biosynthesis; pyridoxine 5'-phosphate from D-erythrose 4-phosphate: step 3/5. Catalyzes the reversible conversion of 3-phosphohydroxypyruvate to phosphoserine and of 3-hydroxy-2-oxo-4-phosphonooxybutanoate to phosphohydroxythreonine. The protein is Phosphoserine aminotransferase of Azobacteroides pseudotrichonymphae genomovar. CFP2.